The following is a 449-amino-acid chain: Alpha-L-fucosidase (449 aa).

The first 19 residues, 1–19 (MGLLLLLSLLSACFQPRYA), serve as a signal peptide directing secretion. N-linked (GlcNAc...) asparagine glycosylation is found at Asn-156, Asn-224, Asn-362, and Asn-375.

It belongs to the glycosyl hydrolase 29 family. Homotetramer.

It localises to the secreted. The enzyme catalyses an alpha-L-fucoside + H2O = L-fucose + an alcohol. In terms of biological role, alpha-L-fucosidase is responsible for hydrolyzing the alpha-1,6-linked fucose joined to the reducing-end N-acetylglucosamine of the carbohydrate moieties of glycoproteins. The sequence is that of Alpha-L-fucosidase from Branchiostoma floridae (Florida lancelet).